The following is a 110-amino-acid chain: Mitochondrial pyruvate carrier 1 (110 aa).

2 helical membrane-spanning segments follow: residues 20-36 (HFWGPIANWGFVAAGLV) and 44-61 (MISGNMSSAMCVYSALFM).

Belongs to the mitochondrial pyruvate carrier (MPC) (TC 2.A.105) family.

The protein localises to the mitochondrion inner membrane. Mediates the uptake of pyruvate into mitochondria. The protein is Mitochondrial pyruvate carrier 1 of Arabidopsis thaliana (Mouse-ear cress).